We begin with the raw amino-acid sequence, 389 residues long: ATP-dependent (S)-NAD(P)H-hydrate dehydratase (389 aa).

Positions 53–389 (TLQLVRNIIP…RGGGRLPQAL (337 aa)) constitute a YjeF C-terminal domain. At Tyr85 the chain carries Phosphotyrosine. (6S)-NADPHX is bound by residues Glu153 and 205–211 (NHMEFSR). ATP is bound by residues 245–249 (KGERD) and 264–273 (GSSRRCGGQG). A (6S)-NADPHX-binding site is contributed by Asp274. Disordered stretches follow at residues 316–350 (KTRA…PGGC) and 369–389 (RSLH…PQAL).

It belongs to the NnrD/CARKD family. Requires Mg(2+) as cofactor.

The protein resides in the mitochondrion. It catalyses the reaction (6S)-NADHX + ATP = ADP + phosphate + NADH + H(+). It carries out the reaction (6S)-NADPHX + ATP = ADP + phosphate + NADPH + H(+). Its function is as follows. Catalyzes the dehydration of the S-form of NAD(P)HX at the expense of ATP, which is converted to ADP. Together with NAD(P)HX epimerase, which catalyzes the epimerization of the S- and R-forms, the enzyme allows the repair of both epimers of NAD(P)HX, a damaged form of NAD(P)H that is a result of enzymatic or heat-dependent hydration. The sequence is that of ATP-dependent (S)-NAD(P)H-hydrate dehydratase from Macaca mulatta (Rhesus macaque).